The following is a 149-amino-acid chain: HMG1/2-like protein (149 aa).

Composition is skewed to basic and acidic residues over residues 1–15 and 35–44; these read MKGGKSKGESKKAET and KGKEPKDPNK. Disordered stretches follow at residues 1–52 and 112–149; these read MKGG…PSAF and AYNKKLEGKDDEEGSDKSKSEVNDEDEDEEDEEDEDDD. A DNA-binding region (HMG box) is located at residues 45–114; it reads PKRPPSAFFV…EYEITLQAYN (70 aa). The span at 134–149 shows a compositional bias: acidic residues; that stretch reads NDEDEDEEDEEDEDDD.

The protein belongs to the HMGB family.

It localises to the nucleus. In Vicia faba (Broad bean), this protein is HMG1/2-like protein.